Consider the following 229-residue polypeptide: NAD-dependent protein deacetylase (229 aa).

Positions 1 to 229 (MNNLKEAIKQ…NDAVKVFAEI (229 aa)) constitute a Deacetylase sirtuin-type domain. NAD(+) contacts are provided by Ala-20, Arg-32, Gln-96, Ile-98, Asp-99, His-114, Thr-181, Ser-182, Asn-205, and Val-223. Ile-98 and Asp-99 together coordinate nicotinamide. His-114 serves as the catalytic Proton acceptor.

This sequence belongs to the sirtuin family. Class U subfamily.

It is found in the cytoplasm. It carries out the reaction N(6)-acetyl-L-lysyl-[protein] + NAD(+) + H2O = 2''-O-acetyl-ADP-D-ribose + nicotinamide + L-lysyl-[protein]. Functionally, NAD-dependent protein deacetylase which modulates the activities of several enzymes which are inactive in their acetylated form. In Listeria innocua serovar 6a (strain ATCC BAA-680 / CLIP 11262), this protein is NAD-dependent protein deacetylase.